Reading from the N-terminus, the 305-residue chain is Probable lipid kinase YegS-like (305 aa).

A DAGKc domain is found at 1-129; that stretch reads MTQRRAMLIL…VDLGEVGGKL (129 aa). Residues Thr39, 65 to 71, and Thr92 each bind ATP; that span reads GDGTLRD. Positions 210, 213, and 215 each coordinate Mg(2+). Glu268 (proton acceptor) is an active-site residue.

This sequence belongs to the diacylglycerol/lipid kinase family. YegS lipid kinase subfamily. Mg(2+) serves as cofactor. Requires Ca(2+) as cofactor.

It localises to the cytoplasm. Its function is as follows. Probably phosphorylates lipids; the in vivo substrate is unknown. The protein is Probable lipid kinase YegS-like of Pseudomonas syringae pv. syringae (strain B728a).